A 119-amino-acid polypeptide reads, in one-letter code: Large ribosomal subunit protein eL8 (119 aa).

The protein belongs to the eukaryotic ribosomal protein eL8 family. As to quaternary structure, part of the 50S ribosomal subunit. Probably part of the RNase P complex.

Its subcellular location is the cytoplasm. Its function is as follows. Multifunctional RNA-binding protein that recognizes the K-turn motif in ribosomal RNA, the RNA component of RNase P, box H/ACA, box C/D and box C'/D' sRNAs. This Archaeoglobus fulgidus (strain ATCC 49558 / DSM 4304 / JCM 9628 / NBRC 100126 / VC-16) protein is Large ribosomal subunit protein eL8.